The primary structure comprises 518 residues: Probable thiamine biosynthetic bifunctional enzyme (518 aa).

Residues 1–229 (MKRQIDYSLY…ATPPCFAQAR (229 aa)) form a thiamine-phosphate synthase region. 4-amino-2-methyl-5-(diphosphooxymethyl)pyrimidine contacts are provided by residues 40-44 (QHREK) and N72. The Mg(2+) site is built by D73 and D92. S111 provides a ligand contact to 4-amino-2-methyl-5-(diphosphooxymethyl)pyrimidine. 137 to 139 (TNT) contributes to the 2-[(2R,5Z)-2-carboxy-4-methylthiazol-5(2H)-ylidene]ethyl phosphate binding site. K140 is a binding site for 4-amino-2-methyl-5-(diphosphooxymethyl)pyrimidine. 2-[(2R,5Z)-2-carboxy-4-methylthiazol-5(2H)-ylidene]ethyl phosphate-binding positions include G173 and 199–200 (VS). Residues 230–518 (SSLTTPKDLL…IERAKLEKAE (289 aa)) are hydroxyethylthiazole kinase. M281 contacts 5-(2-hydroxyethyl)-4-methylthiazole. ATP contacts are provided by K355 and S403. A430 provides a ligand contact to 5-(2-hydroxyethyl)-4-methylthiazole. C433 (proton acceptor; for hydroxyethylthiazole kinase activity) is an active-site residue.

It in the N-terminal section; belongs to the thiamine-phosphate synthase family. The protein in the C-terminal section; belongs to the Thz kinase family. Requires Mg(2+) as cofactor.

It carries out the reaction 2-[(2R,5Z)-2-carboxy-4-methylthiazol-5(2H)-ylidene]ethyl phosphate + 4-amino-2-methyl-5-(diphosphooxymethyl)pyrimidine + 2 H(+) = thiamine phosphate + CO2 + diphosphate. It catalyses the reaction 2-(2-carboxy-4-methylthiazol-5-yl)ethyl phosphate + 4-amino-2-methyl-5-(diphosphooxymethyl)pyrimidine + 2 H(+) = thiamine phosphate + CO2 + diphosphate. The enzyme catalyses 4-methyl-5-(2-phosphooxyethyl)-thiazole + 4-amino-2-methyl-5-(diphosphooxymethyl)pyrimidine + H(+) = thiamine phosphate + diphosphate. The catalysed reaction is 5-(2-hydroxyethyl)-4-methylthiazole + ATP = 4-methyl-5-(2-phosphooxyethyl)-thiazole + ADP + H(+). It participates in cofactor biosynthesis; thiamine diphosphate biosynthesis; 4-methyl-5-(2-phosphoethyl)-thiazole from 5-(2-hydroxyethyl)-4-methylthiazole: step 1/1. Its pathway is cofactor biosynthesis; thiamine diphosphate biosynthesis; thiamine phosphate from 4-amino-2-methyl-5-diphosphomethylpyrimidine and 4-methyl-5-(2-phosphoethyl)-thiazole: step 1/1. Its function is as follows. Condenses 4-methyl-5-(beta-hydroxyethyl)thiazole monophosphate (THZ-P) and 2-methyl-4-amino-5-hydroxymethyl pyrimidine pyrophosphate (HMP-PP) to form thiamine monophosphate (TMP). This Schizosaccharomyces pombe (strain 972 / ATCC 24843) (Fission yeast) protein is Probable thiamine biosynthetic bifunctional enzyme (thi4).